The chain runs to 34 residues: Aspartate aminotransferase 2 (34 aa).

It belongs to the class-I pyridoxal-phosphate-dependent aminotransferase family. As to quaternary structure, homodimer. Pyridoxal 5'-phosphate serves as cofactor.

The enzyme catalyses L-aspartate + 2-oxoglutarate = oxaloacetate + L-glutamate. In terms of biological role, important for the metabolism of amino acids and Krebs-cycle related organic acids. In plants, it is involved in nitrogen metabolism and in aspects of carbon and energy metabolism. This chain is Aspartate aminotransferase 2, found in Pseudotsuga menziesii (Douglas-fir).